Consider the following 881-residue polypeptide: Putative leucine-rich repeat receptor-like protein kinase At2g19210 (881 aa).

The N-terminal stretch at 1-25 is a signal peptide; it reads MVHYNFLSLIIFACFFAVFVLLVRA. Over 26-518 the chain is Extracellular; that stretch reads QDQSGFVSID…SDEKTKKNVY (493 aa). N-linked (GlcNAc...) asparagine glycosylation is found at Asn-143, Asn-234, Asn-295, Asn-310, Asn-404, Asn-419, Asn-435, Asn-446, and Asn-462. LRR repeat units follow at residues 438-460 and 462-483; these read LLHI…LGNL and NLTE…KLLE. Residues 519–539 form a helical membrane-spanning segment; sequence IIPLVASVVGVLGLVLAIALF. The Cytoplasmic segment spans residues 540 to 881; it reads LLYKKRHRRG…FDSGMFPQAR (342 aa). Residues 576 to 850 form the Protein kinase domain; sequence NNFERVLGQG…HVVAELKESV (275 aa). Residues 582–590 and Lys-603 each bind ATP; that span reads LGQGGFGKV. Tyr-648 bears the Phosphotyrosine mark. Asp-699 acts as the Proton acceptor in catalysis. 2 positions are modified to phosphothreonine: Thr-734 and Thr-739. Tyr-747 is modified (phosphotyrosine). A disordered region spans residues 851 to 881; that stretch reads SRARAGGGSGASSVTDPAMTNFDSGMFPQAR.

The protein belongs to the protein kinase superfamily. Ser/Thr protein kinase family.

The protein resides in the cell membrane. It carries out the reaction L-seryl-[protein] + ATP = O-phospho-L-seryl-[protein] + ADP + H(+). It catalyses the reaction L-threonyl-[protein] + ATP = O-phospho-L-threonyl-[protein] + ADP + H(+). In Arabidopsis thaliana (Mouse-ear cress), this protein is Putative leucine-rich repeat receptor-like protein kinase At2g19210.